We begin with the raw amino-acid sequence, 141 residues long: Venom protein family 1 protein 1 (141 aa).

Residues 1 to 17 (MKSFIVVLCCLFAITYG) form the signal peptide. Cys-62 and Cys-139 are oxidised to a cystine.

It belongs to the insect vpf1 family. As to expression, expressed by the venom gland (posterior main gland) (at protein level).

The protein localises to the secreted. This is Venom protein family 1 protein 1 from Platymeris rhadamanthus (Red spot assassin bug).